We begin with the raw amino-acid sequence, 66 residues long: Clarkitoxin-I-Mdum (66 aa).

4 disulfides stabilise this stretch: C3–C24, C17–C42, C46–C59, and C60–C65.

As to expression, expressed by the venom gland.

The protein resides in the secreted. No toxicity is observed upon intravenous or intracerebroventricular injection into mice. Has no cytotoxic activity towards C2C12 cells at 100 ug/ml. This Micrurus dumerilii (Coral snake) protein is Clarkitoxin-I-Mdum.